A 212-amino-acid chain; its full sequence is uncharacterized protein (212 aa).

Gly-53, Glu-74, and Asp-96 together coordinate S-adenosyl-L-methionine.

Belongs to the methyltransferase superfamily. YrrT family.

Its function is as follows. Could be a S-adenosyl-L-methionine-dependent methyltransferase. This is an uncharacterized protein from Anoxybacillus flavithermus (strain DSM 21510 / WK1).